Here is a 341-residue protein sequence, read N- to C-terminus: Methionine import ATP-binding protein MetN (341 aa).

One can recognise an ABC transporter domain in the interval 9-247 (ISVEQLNKEI…PQSAITEELF (239 aa)). Position 41 to 48 (41 to 48 (GHSGSGKS)) interacts with ATP.

The protein belongs to the ABC transporter superfamily. Methionine importer (TC 3.A.1.24) family. The complex is composed of two ATP-binding proteins (MetN), two transmembrane proteins (MetI) and a solute-binding protein (MetQ).

The protein resides in the cell inner membrane. It catalyses the reaction L-methionine(out) + ATP + H2O = L-methionine(in) + ADP + phosphate + H(+). The enzyme catalyses D-methionine(out) + ATP + H2O = D-methionine(in) + ADP + phosphate + H(+). Its function is as follows. Part of the ABC transporter complex MetNIQ involved in methionine import. Responsible for energy coupling to the transport system. In Chlamydia abortus (strain DSM 27085 / S26/3) (Chlamydophila abortus), this protein is Methionine import ATP-binding protein MetN.